A 444-amino-acid polypeptide reads, in one-letter code: Gentisate transporter (444 aa).

12 consecutive transmembrane segments (helical) span residues 42 to 64 (AAVLIGWFFVIFDGYDLIVYGTV), 79 to 101 (LGTIGSTAFFGMAIGAVFIGRLS), 108 to 127 (AAVIGSVLILSVFTMLCAFA), 131 to 153 (WVFGAFRFIAGLGLGGLVPSVNA), 166 to 188 (AWATVMMSGVPIGGSIAAVLALV), 198 to 220 (WRFMFLIALIPLVVGLPIAMKVI), 252 to 274 (WISIWFALATFVTLLAWYGLGTW), 289 to 311 (ALMFTLALNLGAVIGSVVTAWAG), 318 to 340 (RSGVIAAGIAGIALLLLLTYPPV), 344 to 366 (YVILILAGVGTHGTQILIIAAVA), 378 to 400 (LGWALGVGRIGAVVAPQLAGLLL), and 410 to 428 (FIMFGTAALLSALALSVLL).

The protein belongs to the major facilitator superfamily. Aromatic acid:H(+) symporter (AAHS) (TC 2.A.1.15) family.

The protein resides in the cell membrane. Transport of gentisate (2,5-dihydroxybenzoate) into the cell. Does not transport 3-hydroxybenzoate or benzoate. This is Gentisate transporter (genK) from Corynebacterium glutamicum (strain ATCC 13032 / DSM 20300 / JCM 1318 / BCRC 11384 / CCUG 27702 / LMG 3730 / NBRC 12168 / NCIMB 10025 / NRRL B-2784 / 534).